The following is a 524-amino-acid chain: Bifunctional purine biosynthesis protein PurH (524 aa).

An MGS-like domain is found at 1–145 (MIQQALLSVS…KNHRDVTVIV (145 aa)).

It belongs to the PurH family.

It catalyses the reaction (6R)-10-formyltetrahydrofolate + 5-amino-1-(5-phospho-beta-D-ribosyl)imidazole-4-carboxamide = 5-formamido-1-(5-phospho-D-ribosyl)imidazole-4-carboxamide + (6S)-5,6,7,8-tetrahydrofolate. It carries out the reaction IMP + H2O = 5-formamido-1-(5-phospho-D-ribosyl)imidazole-4-carboxamide. Its pathway is purine metabolism; IMP biosynthesis via de novo pathway; 5-formamido-1-(5-phospho-D-ribosyl)imidazole-4-carboxamide from 5-amino-1-(5-phospho-D-ribosyl)imidazole-4-carboxamide (10-formyl THF route): step 1/1. It functions in the pathway purine metabolism; IMP biosynthesis via de novo pathway; IMP from 5-formamido-1-(5-phospho-D-ribosyl)imidazole-4-carboxamide: step 1/1. The polypeptide is Bifunctional purine biosynthesis protein PurH (Ralstonia pickettii (strain 12J)).